An 864-amino-acid polypeptide reads, in one-letter code: Bifunctional uridylyltransferase/uridylyl-removing enzyme (864 aa).

The segment at 1-328 (MLFPYFPLSE…QTNEPVQVRL (328 aa)) is uridylyltransferase. The uridylyl-removing stretch occupies residues 329 to 686 (LDKEFQCVNN…ISNRFSEGGT (358 aa)). In terms of domain architecture, HD spans 446–562 (VDEHIVRTLL…LHFAEAVQNN (117 aa)). ACT domains follow at residues 687 to 766 (EIFV…TFRA) and 793 to 864 (EMEL…LEPK).

Belongs to the GlnD family. It depends on Mg(2+) as a cofactor.

It catalyses the reaction [protein-PII]-L-tyrosine + UTP = [protein-PII]-uridylyl-L-tyrosine + diphosphate. It carries out the reaction [protein-PII]-uridylyl-L-tyrosine + H2O = [protein-PII]-L-tyrosine + UMP + H(+). With respect to regulation, uridylyltransferase (UTase) activity is inhibited by glutamine, while glutamine activates uridylyl-removing (UR) activity. Modifies, by uridylylation and deuridylylation, the PII regulatory proteins (GlnB and homologs), in response to the nitrogen status of the cell that GlnD senses through the glutamine level. Under low glutamine levels, catalyzes the conversion of the PII proteins and UTP to PII-UMP and PPi, while under higher glutamine levels, GlnD hydrolyzes PII-UMP to PII and UMP (deuridylylation). Thus, controls uridylylation state and activity of the PII proteins, and plays an important role in the regulation of nitrogen assimilation and metabolism. This is Bifunctional uridylyltransferase/uridylyl-removing enzyme from Pasteurella multocida (strain Pm70).